The chain runs to 293 residues: 4-diphosphocytidyl-2-C-methyl-D-erythritol kinase (293 aa).

K16 is an active-site residue. An ATP-binding site is contributed by 99 to 109 (PMGAGLGGGSS). Residue D141 is part of the active site.

The protein belongs to the GHMP kinase family. IspE subfamily.

The enzyme catalyses 4-CDP-2-C-methyl-D-erythritol + ATP = 4-CDP-2-C-methyl-D-erythritol 2-phosphate + ADP + H(+). Its pathway is isoprenoid biosynthesis; isopentenyl diphosphate biosynthesis via DXP pathway; isopentenyl diphosphate from 1-deoxy-D-xylulose 5-phosphate: step 3/6. In terms of biological role, catalyzes the phosphorylation of the position 2 hydroxy group of 4-diphosphocytidyl-2C-methyl-D-erythritol. In Burkholderia lata (strain ATCC 17760 / DSM 23089 / LMG 22485 / NCIMB 9086 / R18194 / 383), this protein is 4-diphosphocytidyl-2-C-methyl-D-erythritol kinase.